The chain runs to 255 residues: Taurine import ATP-binding protein TauB (255 aa).

In terms of domain architecture, ABC transporter spans 2–229 (LQISHLYADY…RFVAGESSRS (228 aa)). 34 to 41 (GPSGCGKT) lines the ATP pocket.

This sequence belongs to the ABC transporter superfamily. Taurine importer (TC 3.A.1.17.1) family. In terms of assembly, the complex is composed of two ATP-binding proteins (TauB), two transmembrane proteins (TauC) and a solute-binding protein (TauA).

It localises to the cell inner membrane. The enzyme catalyses taurine(out) + ATP + H2O = taurine(in) + ADP + phosphate + H(+). Part of the ABC transporter complex TauABC involved in taurine import. Responsible for energy coupling to the transport system. This is Taurine import ATP-binding protein TauB from Escherichia coli O6:K15:H31 (strain 536 / UPEC).